Reading from the N-terminus, the 736-residue chain is Prospero homeobox protein 1 (736 aa).

Over residues 103 to 135 (KNGGTEPSFQASGLSSTGSEVHQEDVCSNSSRD) the composition is skewed to polar residues. A disordered region spans residues 103–146 (KNGGTEPSFQASGLSSTGSEVHQEDVCSNSSRDSPQECLSPFGR). The Nuclear localization signal motif lies at 163 to 168 (RAKRAR). Disordered regions lie at residues 180 to 220 (PRVA…QQQS), 261 to 301 (YDST…EMCE), 319 to 344 (EIGE…HPEG), 445 to 465 (NSSD…SLHQ), and 499 to 518 (PSAS…DLTR). The segment covering 264–274 (TDSENDEDGNL) has biased composition (acidic residues). The segment covering 319 to 335 (EIGENKPKREGPKEKDQ) has biased composition (basic and acidic residues). Over residues 450-460 (PASAPPAGGHH) the composition is skewed to low complexity. Residues 505 to 518 (GKERASPESLDLTR) are compositionally biased toward basic and acidic residues. The 59-residue stretch at 576–634 (QEGLSPNHLKKAKLMFFYTRYPSSNMLKTYFSDVKFNRCITSQLIKWFSNFREFYYIQM) folds into the Prospero-type homeo domain. Residues 576–734 (QEGLSPNHLK…KSPNCLQELL (159 aa)) form a homeo-Prospero region. The 100-residue stretch at 635–734 (EKYARQAIND…KSPNCLQELL (100 aa)) folds into the Prospero domain.

The protein belongs to the Prospero homeodomain family. Expressed most actively in the developing lens and midgut and at lower levels in the developing brain, heart, muscle and retina.

The protein resides in the nucleus. Functionally, transcription factor which may be involved in developmental processes such as cell fate determination, gene transcriptional regulation and progenitor cell regulation in a number of organs. May be essential in the development and function of the eye. May play a role in the regulation of the circadian rhythm by repressing the expression of clock genes. In Gallus gallus (Chicken), this protein is Prospero homeobox protein 1 (PROX1).